We begin with the raw amino-acid sequence, 438 residues long: CBL-interacting protein kinase 32 (438 aa).

The Protein kinase domain maps to 13–268 (YELGRTIGEG…IPEILEDEWF (256 aa)). Residues 19–27 (IGEGTFAKV) and K42 contribute to the ATP site. The active-site Proton acceptor is D136. Residues 154–183 (DFGLSALSQQIKDDGLLHTTCGTPNYVAPE) form an activation loop region. The 25-residue stretch at 305–329 (EEPEALNAFELISMSAGLNLGNLFD) folds into the NAF domain. Residues 335–364 (KRETRFTSKCPPKEIVRKIEEAAKPLGFDV) form a PPI region.

Belongs to the protein kinase superfamily. CAMK Ser/Thr protein kinase family. SNF1 subfamily. Mn(2+) is required as a cofactor.

The enzyme catalyses L-seryl-[protein] + ATP = O-phospho-L-seryl-[protein] + ADP + H(+). It catalyses the reaction L-threonyl-[protein] + ATP = O-phospho-L-threonyl-[protein] + ADP + H(+). Its function is as follows. CIPK serine-threonine protein kinases interact with CBL proteins. Binding of a CBL protein to the regulatory NAF domain of CIPK protein lead to the activation of the kinase in a calcium-dependent manner. The polypeptide is CBL-interacting protein kinase 32 (CIPK32) (Oryza sativa subsp. japonica (Rice)).